A 197-amino-acid polypeptide reads, in one-letter code: Recombination protein RecR (197 aa).

The C4-type zinc finger occupies 57 to 72 (CSVCFGITEDDPCHLC). The 96-residue stretch at 79–174 (TTICVVEEPQ…RVTRLAHGIP (96 aa)) folds into the Toprim domain.

Belongs to the RecR family.

Its function is as follows. May play a role in DNA repair. It seems to be involved in an RecBC-independent recombinational process of DNA repair. It may act with RecF and RecO. The protein is Recombination protein RecR of Geotalea daltonii (strain DSM 22248 / JCM 15807 / FRC-32) (Geobacter daltonii).